The primary structure comprises 589 residues: MTNSQTVSLIGPTQMAPQSTPPPPVNELWFIDAQAMFQNYANLRSFSKSNANEINTTIGGFVFGRKARKQVIHVLFAYAEDLTESNRQFLESSLSADIELVGNLNIDGQSQILPGGQFTLQLTSRMLENRSISEFLDMNVMFNNEHVLMEGASCVSRVGYEWSLRAGREQEDVKSAAERLSMASFRFTYLNAEHGLVIREQKPEAAQQKYLDKFSKGAVPYKDVIEFTAMQSLTRDTSNDTEDQKLVPTVKVTKDNKHFTRLVTIGEVVFPAFFGDSSLDLYKRSREAFNRRANNTMMVTVNGIRAGRGVTTTTSATYLPPGWVSLLHLQLPTKWTDNEQRNYRIRLHKLFNLPSSKPVLRLSQALALHSESARLTNKKLIREPHLSITNYQPVGEITTVNGPYNYHHYMQDGIDDSGWGCAYRSFQTIWSWFILNGYTDKPVPSHREIQQALVDIQDKQAKFVGSRQWIGSTEISFVLNELLKLECRFIATNSGAEVVERVRELARHFETSGTPVMIGGNMLAHTILGVDFNDTTGETKFLVLDPHYTGSEDIKTITSKGWCAWKPASFWSKDHFYNMVLPQPPSDAI.

Residues 1–22 (MTNSQTVSLIGPTQMAPQSTPP) form a disordered region. Residues C421, D545, and H547 contribute to the active site.

The protein belongs to the peptidase C78 family. As to quaternary structure, interacts with odr-4. As to expression, expressed in head and tail neurons. Expressed in the amphid head neurons ADL, ASI, ASH, ASJ, ASG, ADF, ASK, AWA, AWB, AWC, and in two tail neurons, the phasmid tail neurons PHA and PHB.

It localises to the endoplasmic reticulum membrane. The protein resides in the cytoplasm. The protein localises to the perinuclear region. In terms of biological role, thiol protease which recognizes and hydrolyzes the peptide bond at the C-terminal Gly of ufm-1, a ubiquitin-like modifier protein bound to a number of target proteins. Required, with oct-4, for the localization of a subset of 7 transmembrane domain odorant receptors, including odr-10, to the cilia of olfactory neurons AWA and AWC. Operates in aggregation behavior, and responses to oxygen levels. The polypeptide is Ufm1-specific protease (Caenorhabditis elegans).